Here is a 631-residue protein sequence, read N- to C-terminus: 1,4-alpha-glucan branching enzyme GlgB (631 aa).

The active-site Nucleophile is Asp309. Glu362 functions as the Proton donor in the catalytic mechanism.

The protein belongs to the glycosyl hydrolase 13 family. GlgB subfamily. As to quaternary structure, monomer.

The enzyme catalyses Transfers a segment of a (1-&gt;4)-alpha-D-glucan chain to a primary hydroxy group in a similar glucan chain.. Its pathway is glycan biosynthesis; glycogen biosynthesis. Its function is as follows. Catalyzes the formation of the alpha-1,6-glucosidic linkages in glycogen by scission of a 1,4-alpha-linked oligosaccharide from growing alpha-1,4-glucan chains and the subsequent attachment of the oligosaccharide to the alpha-1,6 position. The chain is 1,4-alpha-glucan branching enzyme GlgB from Marinobacter nauticus (strain ATCC 700491 / DSM 11845 / VT8) (Marinobacter aquaeolei).